Reading from the N-terminus, the 122-residue chain is Large ribosomal subunit protein uL14c (122 aa).

Belongs to the universal ribosomal protein uL14 family. In terms of assembly, part of the 50S ribosomal subunit.

The protein resides in the plastid. The protein localises to the chloroplast. Its function is as follows. Binds to 23S rRNA. This is Large ribosomal subunit protein uL14c from Piper cenocladum (Ant piper).